The sequence spans 334 residues: MITSSLPLTDLHRHLDGNIRTQTILELGQKFGVKLPANTLQTLTPYVQIVEAEPSLVAFLSKLDWGVAVLGDLDACRRVAYENVEDALNARIDYAELRFSPYYMAMKHSLPVTGVVEAVVDGVRAGVRDFGIQANLIGIMSRTFGTDACQQELDAILSQKNHIVAVDLAGDELGQPGDRFIQHFKQVRDAGLHVTVHAGEAAGPESMWQAIRDLGATRIGHGVKAIHDPKLMDYLAQHRIGIESCLTSNLQTSTVDSLATHPLKRFLEHGILACINTDDPAVEGIELPYEYEVAAPQAGLSQEQIRQAQLNGLELAFLSDSEKKALLAKAALRG.

Positions 12 and 14 each coordinate Zn(2+). His-14, Asp-16, and Gly-170 together coordinate substrate. Position 197 (His-197) interacts with Zn(2+). The active-site Proton donor is the Glu-200. Asp-278 contacts Zn(2+). Asp-279 serves as a coordination point for substrate.

The protein belongs to the metallo-dependent hydrolases superfamily. Adenosine and AMP deaminases family. Adenosine deaminase subfamily. It depends on Zn(2+) as a cofactor.

The catalysed reaction is adenosine + H2O + H(+) = inosine + NH4(+). The enzyme catalyses 2'-deoxyadenosine + H2O + H(+) = 2'-deoxyinosine + NH4(+). Functionally, catalyzes the hydrolytic deamination of adenosine and 2-deoxyadenosine. In Vibrio cholerae serotype O1 (strain ATCC 39541 / Classical Ogawa 395 / O395), this protein is Adenosine deaminase.